We begin with the raw amino-acid sequence, 225 residues long: UPF0502 protein Ajs_3392 (225 aa).

Belongs to the UPF0502 family.

In Acidovorax sp. (strain JS42), this protein is UPF0502 protein Ajs_3392.